The primary structure comprises 309 residues: Olfactory receptor 5H17 (309 aa).

At 1–28 (MEKKNETLWTEFVLTGLTCLPQWKPLLF) the chain is on the extracellular side. N-linked (GlcNAc...) asparagine glycosylation occurs at N5. The helical transmembrane segment at 29–49 (LVFLVIYFMTIVGNLGLITLI) threads the bilayer. Topologically, residues 50–56 (WNDPHLH) are cytoplasmic. A helical membrane pass occupies residues 57–77 (IPMYLFLSNLAFVDTWLSSTV). The Extracellular segment spans residues 78-93 (TPRMLFNLLDKGKVIS). The chain crosses the membrane as a helical span at residues 94–114 (VAECKTQFFSFAISVTTECFL). The cysteines at positions 97 and 189 are disulfide-linked. Over 115–144 (LAAMAYDRYAAICNPLLYPVIMTNRLCVRL) the chain is Cytoplasmic. Residues 145–165 (LALSFIGGFLHAVIHESFLSR) traverse the membrane as a helical segment. At 166-198 (LTFCNSNIIYHFYCDVIPLLKISCTDPSLNYLI) the chain is on the extracellular side. The chain crosses the membrane as a helical span at residues 199–219 (IFIFSGSIQVFTIMTVLISYT). Topologically, residues 220-239 (FVLFTILKKKSDKGIRKAFS) are cytoplasmic. The chain crosses the membrane as a helical span at residues 240–260 (TCGAHLLSVSLYYGPLLFMYV). Over 261–271 (HPASSEVDDQD) the chain is Extracellular. Residues 272 to 292 (MILSLFYTVIIPVLNPIIYSL) traverse the membrane as a helical segment. Residues 293-309 (RNKQVIDSLKKMLKMMV) lie on the Cytoplasmic side of the membrane.

The protein belongs to the G-protein coupled receptor 1 family.

It localises to the cell membrane. In terms of biological role, potential odorant receptor. The protein is Olfactory receptor 5H17 of Mus musculus (Mouse).